The following is a 138-amino-acid chain: Protein FAM136A (138 aa).

At Ala2 the chain carries N-acetylalanine. Residues Thr124 and Thr126 each carry the phosphothreonine modification.

It belongs to the FAM136 family.

The sequence is that of Protein FAM136A (Fam136a) from Rattus norvegicus (Rat).